A 220-amino-acid polypeptide reads, in one-letter code: Ribonuclease P protein component 3 (220 aa).

Belongs to the eukaryotic/archaeal RNase P protein component 3 family. As to quaternary structure, consists of a catalytic RNA component and at least 4-5 protein subunits.

It is found in the cytoplasm. It catalyses the reaction Endonucleolytic cleavage of RNA, removing 5'-extranucleotides from tRNA precursor.. Part of ribonuclease P, a protein complex that generates mature tRNA molecules by cleaving their 5'-ends. This Thermococcus kodakarensis (strain ATCC BAA-918 / JCM 12380 / KOD1) (Pyrococcus kodakaraensis (strain KOD1)) protein is Ribonuclease P protein component 3.